A 501-amino-acid chain; its full sequence is Aluminum-activated malate transporter 2 (501 aa).

Helical transmembrane passes span 22-42, 52-72, 78-98, 101-121, 130-150, and 166-186; these read VVHA…YYYQ, AMWA…ATLG, AVAT…ASLS, TVEP…STFV, RYDY…VSGF, and VIMG…VWAG. The segment at 398–425 is disordered; the sequence is FKNKKKPSKSNSGSIGQAMPNKSHDDDD.

The protein belongs to the aromatic acid exporter (TC 2.A.85) family.

The protein resides in the membrane. Functionally, malate transporter. This is Aluminum-activated malate transporter 2 (ALMT2) from Arabidopsis thaliana (Mouse-ear cress).